The following is a 300-amino-acid chain: Protoheme IX farnesyltransferase (300 aa).

9 helical membrane-spanning segments follow: residues Val26–Pro46, Ile54–Ile74, Leu102–Pro122, Leu123–Leu143, Asn150–Thr170, Ala177–Leu197, Val224–Ser244, Trp246–Leu266, and Phe279–Leu299.

It belongs to the UbiA prenyltransferase family. Protoheme IX farnesyltransferase subfamily.

The protein resides in the cell inner membrane. The enzyme catalyses heme b + (2E,6E)-farnesyl diphosphate + H2O = Fe(II)-heme o + diphosphate. It participates in porphyrin-containing compound metabolism; heme O biosynthesis; heme O from protoheme: step 1/1. Its function is as follows. Converts heme B (protoheme IX) to heme O by substitution of the vinyl group on carbon 2 of heme B porphyrin ring with a hydroxyethyl farnesyl side group. The polypeptide is Protoheme IX farnesyltransferase (Verminephrobacter eiseniae (strain EF01-2)).